The following is a 322-amino-acid chain: Ferredoxin--NADP reductase (322 aa).

7 residues coordinate FAD: Asp34, Gln42, Tyr47, Val87, Phe120, Asp279, and Thr320.

It belongs to the ferredoxin--NADP reductase type 2 family. In terms of assembly, homodimer. It depends on FAD as a cofactor.

It carries out the reaction 2 reduced [2Fe-2S]-[ferredoxin] + NADP(+) + H(+) = 2 oxidized [2Fe-2S]-[ferredoxin] + NADPH. The sequence is that of Ferredoxin--NADP reductase from Streptococcus pneumoniae serotype 2 (strain D39 / NCTC 7466).